The following is a 141-amino-acid chain: Large ribosomal subunit protein uL11B/uL11C (141 aa).

It belongs to the universal ribosomal protein uL11 family. In terms of assembly, part of the ribosomal stalk of the 50S ribosomal subunit. Interacts with L10 and the large rRNA to form the base of the stalk. L10 forms an elongated spine to which L12 dimers bind in a sequential fashion forming a multimeric L10(L12)X complex. In terms of processing, one or more lysine residues are methylated.

Its function is as follows. Forms part of the ribosomal stalk which helps the ribosome interact with GTP-bound translation factors. The polypeptide is Large ribosomal subunit protein uL11B/uL11C (Bacillus cereus (strain ATCC 14579 / DSM 31 / CCUG 7414 / JCM 2152 / NBRC 15305 / NCIMB 9373 / NCTC 2599 / NRRL B-3711)).